We begin with the raw amino-acid sequence, 85 residues long: Coiled-coil-helix-coiled-coil-helix domain-containing protein 7 (85 aa).

Residues 13–55 (SNPCLEETDASTKCMDDNRYEKDLCTPYFVKYKNCRKFWNGIM) form the CHCH domain. 2 consecutive short sequence motifs (cx9C motif) follow at residues 16–26 (CLEETDASTKC) and 37–47 (CTPYFVKYKNC). 2 cysteine pairs are disulfide-bonded: Cys16/Cys47 and Cys26/Cys37.

The protein belongs to the CHCHD7 family.

It localises to the mitochondrion intermembrane space. This Xenopus tropicalis (Western clawed frog) protein is Coiled-coil-helix-coiled-coil-helix domain-containing protein 7 (chchd7).